Reading from the N-terminus, the 510-residue chain is Cobyric acid synthase (510 aa).

Residues 262–460 (EIKVGIIKLP…IHGIFENDEW (199 aa)) enclose the GATase cobBQ-type domain. Cys343 serves as the catalytic Nucleophile. Residue His452 is part of the active site.

Belongs to the CobB/CobQ family. CobQ subfamily.

It functions in the pathway cofactor biosynthesis; adenosylcobalamin biosynthesis. Its function is as follows. Catalyzes amidations at positions B, D, E, and G on adenosylcobyrinic A,C-diamide. NH(2) groups are provided by glutamine, and one molecule of ATP is hydrogenolyzed for each amidation. The sequence is that of Cobyric acid synthase from Prochlorococcus marinus (strain MIT 9515).